Here is a 142-residue protein sequence, read N- to C-terminus: Acidic phospholipase A2 PA4 (142 aa).

Ca(2+)-binding residues include W10, G12, and G14. Intrachain disulfides connect C11/C33, C32/C72, and C39/C65. H36 is an active-site residue. A Ca(2+)-binding site is contributed by D37.

Belongs to the phospholipase A2 family. Group III subfamily. The cofactor is Ca(2+). In terms of tissue distribution, expressed by the venom gland.

The protein resides in the secreted. It catalyses the reaction a 1,2-diacyl-sn-glycero-3-phosphocholine + H2O = a 1-acyl-sn-glycero-3-phosphocholine + a fatty acid + H(+). Functionally, PLA2 catalyzes the calcium-dependent hydrolysis of the 2-acyl groups in 3-sn-phosphoglycerides. The sequence is that of Acidic phospholipase A2 PA4 from Heloderma suspectum (Gila monster).